The chain runs to 359 residues: Peptide chain release factor 1 (359 aa).

An N5-methylglutamine modification is found at Q236.

Belongs to the prokaryotic/mitochondrial release factor family. Methylated by PrmC. Methylation increases the termination efficiency of RF1.

It localises to the cytoplasm. Functionally, peptide chain release factor 1 directs the termination of translation in response to the peptide chain termination codons UAG and UAA. The chain is Peptide chain release factor 1 from Streptococcus thermophilus (strain ATCC BAA-250 / LMG 18311).